We begin with the raw amino-acid sequence, 277 residues long: WRKY transcription factor 68 (277 aa).

A disordered region spans residues 51–96; that stretch reads TPLMHFPTTPNSSSSEAVNGDDEEEEDGEEQQHKTKKRFKFTKMSR. Residues 58–67 are compositionally biased toward polar residues; it reads TTPNSSSSEA. The span at 69–79 shows a compositional bias: acidic residues; it reads NGDDEEEEDGE. Residues 84 to 96 show a composition bias toward basic residues; the sequence is KTKKRFKFTKMSR. Residues 112–177 constitute a DNA-binding region (WRKY); that stretch reads SEVLHLDDGY…YEGQHTHPRP (66 aa). The tract at residues 183 to 206 is disordered; it reads KEGSSPSNGSASRAHIGLPTLPPQ.

It belongs to the WRKY group II-c family.

The protein localises to the nucleus. In terms of biological role, transcription factor. Interacts specifically with the W box (5'-(T)TGAC[CT]-3'), a frequently occurring elicitor-responsive cis-acting element. The protein is WRKY transcription factor 68 (WRKY68) of Arabidopsis thaliana (Mouse-ear cress).